The primary structure comprises 382 residues: MLVVRADYKKYPVPVLEKMRIDEDEFYNKYDACVVVQTCNRIEAYFDTEINSNVDGILKDFQGFDVLKGKNATFHFLKVSCGMDSMILGENQILGQIKTSFQKARELKKTSRYLDSLFLKAIHVGQRARTETKINEGGVSIGSAAVELAEKNFGLANRNVLLIGAGEMGTLVAKALIEKHIKAVIVANRTYERAETLAKELKGMAVHFDKLKEAINFSDVIICATSSPHHILEKKDLIDVGNKIIIDIANPRDVDDSVRELENIELYAIDDLRHISDKNLQSRIEEIPAVEKIIDEEYEVLMKQIEKINVEEVLKEFNNYIEEIRVKELEKAIKLSKTKNPEEIMENFSKAFAKRITHDFVSYSINTSKEDLMNSAWWKNGK.

Substrate is bound by residues 38 to 41 (TCNR), Ser-85, 90 to 92 (ENQ), and Gln-96. Cys-39 acts as the Nucleophile in catalysis. Residue 164-169 (GAGEMG) participates in NADP(+) binding.

It belongs to the glutamyl-tRNA reductase family. Homodimer.

It carries out the reaction (S)-4-amino-5-oxopentanoate + tRNA(Glu) + NADP(+) = L-glutamyl-tRNA(Glu) + NADPH + H(+). It functions in the pathway porphyrin-containing compound metabolism; protoporphyrin-IX biosynthesis; 5-aminolevulinate from L-glutamyl-tRNA(Glu): step 1/2. Catalyzes the NADPH-dependent reduction of glutamyl-tRNA(Glu) to glutamate 1-semialdehyde (GSA). The sequence is that of Glutamyl-tRNA reductase from Methanococcus maripaludis (strain C5 / ATCC BAA-1333).